The sequence spans 156 residues: Ribosomal RNA large subunit methyltransferase H (156 aa).

Residues leucine 73, glycine 104, and 123–128 (IGPLTL) each bind S-adenosyl-L-methionine.

Belongs to the RNA methyltransferase RlmH family. In terms of assembly, homodimer.

The protein localises to the cytoplasm. It catalyses the reaction pseudouridine(1915) in 23S rRNA + S-adenosyl-L-methionine = N(3)-methylpseudouridine(1915) in 23S rRNA + S-adenosyl-L-homocysteine + H(+). Its function is as follows. Specifically methylates the pseudouridine at position 1915 (m3Psi1915) in 23S rRNA. The sequence is that of Ribosomal RNA large subunit methyltransferase H from Xanthomonas campestris pv. campestris (strain 8004).